Reading from the N-terminus, the 161-residue chain is Peroxynitrite isomerase 1 (161 aa).

The GXWXGXG signature appears at 17–23 (GTWTGRG). H152 provides a ligand contact to heme b.

It belongs to the nitrobindin family. In terms of assembly, homodimer. Heme b is required as a cofactor.

The catalysed reaction is peroxynitrite = nitrate. The protein operates within nitrogen metabolism. In terms of biological role, heme-binding protein able to scavenge peroxynitrite and to protect free L-tyrosine against peroxynitrite-mediated nitration, by acting as a peroxynitrite isomerase that converts peroxynitrite to nitrate. Therefore, this protein likely plays a role in peroxynitrite sensing and in the detoxification of reactive nitrogen and oxygen species (RNS and ROS, respectively). Is able to bind nitric oxide (NO) in vitro, but may act as a sensor of peroxynitrite levels in vivo. In Mycolicibacterium paratuberculosis (strain ATCC BAA-968 / K-10) (Mycobacterium paratuberculosis), this protein is Peroxynitrite isomerase 1.